The primary structure comprises 137 residues: Type 3 secretion system pilotin (137 aa).

Positions 1 to 14 (MLLPLALLLGGCVS) are cleaved as a signal peptide.

It belongs to the ExsB/YscW family.

Its subcellular location is the cell outer membrane. Functionally, involved in the synthesis of the type III secretion system (T3SS), also called injectisome, which is used to inject bacterial effector proteins into eukaryotic host cells. Pilot protein that is required for the proper localization of the secretin PscC in the outer membrane. Necessary for full in vivo virulence. This is Type 3 secretion system pilotin from Pseudomonas aeruginosa (strain ATCC 15692 / DSM 22644 / CIP 104116 / JCM 14847 / LMG 12228 / 1C / PRS 101 / PAO1).